A 95-amino-acid chain; its full sequence is Putative regulatory protein STH1338 (95 aa).

The protein belongs to the RemA family.

The polypeptide is Putative regulatory protein STH1338 (Symbiobacterium thermophilum (strain DSM 24528 / JCM 14929 / IAM 14863 / T)).